We begin with the raw amino-acid sequence, 266 residues long: Hemin import ATP-binding protein HmuV (266 aa).

In terms of domain architecture, ABC transporter spans 12–248; sequence LEANQLSYHV…ETLTRWYQAD (237 aa). 44–51 provides a ligand contact to ATP; sequence GPNGAGKS.

The protein belongs to the ABC transporter superfamily. Heme (hemin) importer (TC 3.A.1.14.5) family. As to quaternary structure, the complex is composed of two ATP-binding proteins (HmuV), two transmembrane proteins (HmuU) and a solute-binding protein (HmuT).

The protein localises to the cell inner membrane. Functionally, part of the ABC transporter complex HmuTUV involved in hemin import. Responsible for energy coupling to the transport system. The protein is Hemin import ATP-binding protein HmuV of Yersinia enterocolitica.